The following is a 788-amino-acid chain: Glycerol-3-phosphate acyltransferase (788 aa).

Residues 104-135 are disordered; it reads LLPGRDPYHPNPRQQRRILRSDPQRARVMAGE. The short motif at 271–276 is the HXXXXD motif element; it reads SHRSYI.

Belongs to the GPAT/DAPAT family.

The protein resides in the cell membrane. It catalyses the reaction sn-glycerol 3-phosphate + an acyl-CoA = a 1-acyl-sn-glycero-3-phosphate + CoA. It participates in phospholipid metabolism; CDP-diacylglycerol biosynthesis; CDP-diacylglycerol from sn-glycerol 3-phosphate: step 1/3. This chain is Glycerol-3-phosphate acyltransferase, found in Mycobacterium marinum (strain ATCC BAA-535 / M).